A 537-amino-acid chain; its full sequence is Proline--tRNA ligase (537 aa).

This sequence belongs to the class-II aminoacyl-tRNA synthetase family. ProS type 3 subfamily. Homodimer.

It is found in the cytoplasm. The enzyme catalyses tRNA(Pro) + L-proline + ATP = L-prolyl-tRNA(Pro) + AMP + diphosphate. Catalyzes the attachment of proline to tRNA(Pro) in a two-step reaction: proline is first activated by ATP to form Pro-AMP and then transferred to the acceptor end of tRNA(Pro). This is Proline--tRNA ligase from Nanoarchaeum equitans (strain Kin4-M).